The primary structure comprises 269 residues: Phosphatidylglycerol--prolipoprotein diacylglyceryl transferase (269 aa).

The next 3 helical transmembrane spans lie at 21–41 (WYGI…VLEG), 54–74 (LLLY…VVFE), and 88–108 (IWDG…VILI). Arg-136 contributes to the a 1,2-diacyl-sn-glycero-3-phospho-(1'-sn-glycerol) binding site. The next 2 membrane-spanning stretches (helical) occupy residues 206–226 (GEVV…IEGM) and 236–256 (LRVS…AIFY).

This sequence belongs to the Lgt family.

The protein localises to the cell membrane. It catalyses the reaction L-cysteinyl-[prolipoprotein] + a 1,2-diacyl-sn-glycero-3-phospho-(1'-sn-glycerol) = an S-1,2-diacyl-sn-glyceryl-L-cysteinyl-[prolipoprotein] + sn-glycerol 1-phosphate + H(+). The protein operates within protein modification; lipoprotein biosynthesis (diacylglyceryl transfer). Functionally, catalyzes the transfer of the diacylglyceryl group from phosphatidylglycerol to the sulfhydryl group of the N-terminal cysteine of a prolipoprotein, the first step in the formation of mature lipoproteins. The sequence is that of Phosphatidylglycerol--prolipoprotein diacylglyceryl transferase from Ligilactobacillus salivarius (strain UCC118) (Lactobacillus salivarius).